The following is an 849-amino-acid chain: G-type lectin S-receptor-like serine/threonine-protein kinase At4g11900 (849 aa).

The signal sequence occupies residues 1 to 26 (MQICKKNVFLLYYGVLVFLSFQVSSS). Positions 27–180 (TDTISTNQPL…PNSSAAVLWQ (154 aa)) constitute a Bulb-type lectin domain. Topologically, residues 27–466 (TDTISTNQPL…RKTEHSKGKS (440 aa)) are extracellular. N-linked (GlcNAc...) asparagine glycans are attached at residues Asn-111, Asn-148, Asn-172, and Asn-232. One can recognise an EGF-like domain in the interval 311-348 (PDNRCDVYNSCGSFGICNENREPPPCRCVPGFKREFSQ). 4 disulfide bridges follow: Cys-315-Cys-327, Cys-321-Cys-336, Cys-401-Cys-421, and Cys-405-Cys-411. The PAN domain occupies 368–447 (CYKRNDEFLP…KGHTFFLRLA (80 aa)). Asn-450 is a glycosylation site (N-linked (GlcNAc...) asparagine). A helical transmembrane segment spans residues 467 to 487 (IVLPLVLASLVATAACFVGLY). Residues 488 to 849 (CCISSRIRRK…EATQTELEAR (362 aa)) are Cytoplasmic-facing. Residues 537–822 (FSRKKKLGEG…TLPIPKQPTF (286 aa)) form the Protein kinase domain. ATP is bound by residues 543–551 (LGEGGFGPV) and Lys-565. At Ser-571 the chain carries Phosphoserine. Residues 626–643 (LKSRELDWETRMKIVNGT) form a caM-binding region. Asp-662 serves as the catalytic Proton acceptor. A phosphoserine mark is found at Ser-666 and Ser-679. Residue Thr-696 is modified to Phosphothreonine. Phosphoserine is present on Ser-837. Phosphothreonine is present on Thr-844.

Belongs to the protein kinase superfamily. Ser/Thr protein kinase family.

It localises to the cell membrane. The enzyme catalyses L-seryl-[protein] + ATP = O-phospho-L-seryl-[protein] + ADP + H(+). It catalyses the reaction L-threonyl-[protein] + ATP = O-phospho-L-threonyl-[protein] + ADP + H(+). This chain is G-type lectin S-receptor-like serine/threonine-protein kinase At4g11900, found in Arabidopsis thaliana (Mouse-ear cress).